The following is a 415-amino-acid chain: Serine/threonine-protein kinase H1 homolog (415 aa).

Residues 1 to 70 form a disordered region; sequence MGCMSSKLVP…SNRKVKKYRD (70 aa). Residues 41–50 show a composition bias toward basic and acidic residues; that stretch reads GPRDPTKDPK. The region spanning 80-334 is the Protein kinase domain; it reads YDIKALIGRG…AADALKHQWL (255 aa). ATP is bound by residues 86–94 and K109; that span reads IGRGNFSKV. The Proton acceptor role is filled by D198. A compositionally biased stretch (polar residues) spans 353–362; it reads NLIHRQSTRA. The disordered stretch occupies residues 353–415; the sequence is NLIHRQSTRA…DVQADLASLG (63 aa). The segment covering 363–385 has biased composition (low complexity); that stretch reads NSTKSAKSTRSTKSNKSNRSGRS. Over residues 386-406 the composition is skewed to basic and acidic residues; it reads LRSEHRRVMPDEIDELHRDPD.

It belongs to the protein kinase superfamily. CAMK Ser/Thr protein kinase family.

It carries out the reaction L-seryl-[protein] + ATP = O-phospho-L-seryl-[protein] + ADP + H(+). The enzyme catalyses L-threonyl-[protein] + ATP = O-phospho-L-threonyl-[protein] + ADP + H(+). This chain is Serine/threonine-protein kinase H1 homolog (PSKH1), found in Pinctada fucata (Akoya pearl oyster).